Here is a 393-residue protein sequence, read N- to C-terminus: 2,3,4,5-tetrahydropyridine-2,6-dicarboxylate N-succinyltransferase (393 aa).

Residue glutamate 261 is the Acyl-anhydride intermediate of the active site. Succinyl-CoA contacts are provided by residues arginine 263, glycine 278, serine 281, alanine 304, 319–320 (DA), glycine 327, lysine 356, and 369–372 (RQDS).

The protein belongs to the type 2 tetrahydrodipicolinate N-succinyltransferase family. In terms of assembly, homotrimer.

The protein localises to the cytoplasm. It carries out the reaction (S)-2,3,4,5-tetrahydrodipicolinate + succinyl-CoA + H2O = (S)-2-succinylamino-6-oxoheptanedioate + CoA. The protein operates within amino-acid biosynthesis; L-lysine biosynthesis via DAP pathway; LL-2,6-diaminopimelate from (S)-tetrahydrodipicolinate (succinylase route): step 1/3. In terms of biological role, catalyzes the conversion of the cyclic tetrahydrodipicolinate (THDP) into the acyclic N-succinyl-L-2-amino-6-oxopimelate using succinyl-CoA. This chain is 2,3,4,5-tetrahydropyridine-2,6-dicarboxylate N-succinyltransferase, found in Nitratiruptor sp. (strain SB155-2).